A 263-amino-acid polypeptide reads, in one-letter code: LIM and SH3 domain protein 1 (263 aa).

The residue at position 1 (methionine 1) is an N-acetylmethionine. The LIM zinc-binding domain maps to 3–63; that stretch reads PNCARCGKIV…NAHYPKQSFT (61 aa). Residue lysine 42 is modified to N6-acetyllysine. Nebulin repeat units follow at residues 64–95 and 97–131; these read MVADTPENLRLKQQSELQSQVRYKEEFEKNKG and GFSVVADTPELQRIKKTQDQISNIKYHEEFEKSRM. Position 68 is a phosphothreonine (threonine 68). At lysine 75 the chain carries N6-methyllysine. Serine 99 is modified (phosphoserine). Threonine 104 carries the phosphothreonine modification. An N6-succinyllysine modification is found at lysine 112. A phosphoserine mark is found at serine 118 and serine 134. A disordered region spans residues 122–207; that stretch reads YHEEFEKSRM…QRSAPGGGGK (86 aa). The span at 148 to 162 shows a compositional bias: polar residues; it reads DSSSYRRPTEQQQPQ. In terms of domain architecture, SH3 spans 204 to 263; the sequence is GGGKRYRAVYDYSAADEDEVSFQDGDTIVNVQQIDDGWMYGTVERTGDTGMLPANYVEAI.

In terms of assembly, interacts with F-actin. Interacts with ANKRD54. Interacts with KBTBD10. Post-translationally, phosphorylated. In terms of tissue distribution, expressed in a wide range of tissues (but not the heart or skeletal muscle), the expression is specific for certain actin-rich cell types within these tissues. Expression is prominent in the cortical regions of ion-transporting duct cells in the pancreas, in the salivary parotid gland and in certain F-actin-rich cells in the distal tubule/collecting duct. In primary cultures of gastric fibroblasts, expression is mainly within the tips of lamellipodia and at the leading edges of membrane ruffles.

The protein localises to the cytoplasm. The protein resides in the cell cortex. Its subcellular location is the cytoskeleton. Plays an important role in the regulation of dynamic actin-based, cytoskeletal activities. Agonist-dependent changes in LASP1 phosphorylation may also serve to regulate actin-associated ion transport activities, not only in the parietal cell but also in certain other F-actin-rich secretory epithelial cell types. The chain is LIM and SH3 domain protein 1 from Rattus norvegicus (Rat).